We begin with the raw amino-acid sequence, 864 residues long: DNA mismatch repair protein MutS (864 aa).

Residue 621-628 (GPNMGGKS) coordinates ATP. Residues 804-833 (ETGKPESPAPVASRSSKPSMQADMFAEPQP) form a disordered region.

Belongs to the DNA mismatch repair MutS family.

This protein is involved in the repair of mismatches in DNA. It is possible that it carries out the mismatch recognition step. This protein has a weak ATPase activity. In Teredinibacter turnerae (strain ATCC 39867 / T7901), this protein is DNA mismatch repair protein MutS.